The sequence spans 597 residues: Arginine--tRNA ligase (597 aa).

The short motif at 138–148 is the 'HIGH' region element; it reads ANPTGPMHVGH.

The protein belongs to the class-I aminoacyl-tRNA synthetase family. As to quaternary structure, monomer.

The protein localises to the cytoplasm. It catalyses the reaction tRNA(Arg) + L-arginine + ATP = L-arginyl-tRNA(Arg) + AMP + diphosphate. This is Arginine--tRNA ligase from Nitrobacter hamburgensis (strain DSM 10229 / NCIMB 13809 / X14).